We begin with the raw amino-acid sequence, 139 residues long: Chorion protein S16 (139 aa).

Residues Met-1 to Ala-21 form the signal peptide.

The protein belongs to the chorion protein S16 family.

The protein localises to the secreted. Functionally, chorion membrane (egg shell) protein; plays a role in protecting the egg from the environment. This Drosophila virilis (Fruit fly) protein is Chorion protein S16 (Cp16).